The primary structure comprises 80 residues: uncharacterized protein (80 aa).

This is an uncharacterized protein from Methanothermobacter thermautotrophicus (Methanobacterium thermoformicicum).